The following is a 524-amino-acid chain: Na(+)/H(+) antiporter NhaB (524 aa).

The next 9 membrane-spanning stretches (helical) occupy residues 13–33, 98–118, 140–160, 239–259, 304–324, 325–345, 358–378, 448–468, and 479–499; these read FLGNSPDWYKLAIMGFLIINP, LLLVFMVAGIYFMKQLLLFVF, AFLSAFLDALTVIAVVISVSV, FFIRMLPVTLPVFIFGLLVCL, AIIGVWLVLALALHLAEVGLV, GLSVIILATSFCGITNEHSLG, LTVFFAVVAVIIEQSLFTPII, ATPNGQAAFLFLLTSALAPLI, and ALPYTLVMTIVGLLGVEFLLV.

Belongs to the NhaB Na(+)/H(+) (TC 2.A.34) antiporter family.

It is found in the cell inner membrane. It catalyses the reaction 2 Na(+)(in) + 3 H(+)(out) = 2 Na(+)(out) + 3 H(+)(in). Its function is as follows. Na(+)/H(+) antiporter that extrudes sodium in exchange for external protons. In Yersinia pseudotuberculosis serotype I (strain IP32953), this protein is Na(+)/H(+) antiporter NhaB.